Consider the following 273-residue polypeptide: GTP cyclohydrolase MptA (273 aa).

It belongs to the GTP cyclohydrolase IV family. In terms of assembly, homodimer. Fe(2+) is required as a cofactor.

It carries out the reaction GTP + H2O = 7,8-dihydroneopterin 2',3'-cyclic phosphate + formate + diphosphate + H(+). It functions in the pathway cofactor biosynthesis; 5,6,7,8-tetrahydromethanopterin biosynthesis. In terms of biological role, converts GTP to 7,8-dihydro-D-neopterin 2',3'-cyclic phosphate, the first intermediate in the biosynthesis of coenzyme methanopterin. In Picrophilus torridus (strain ATCC 700027 / DSM 9790 / JCM 10055 / NBRC 100828 / KAW 2/3), this protein is GTP cyclohydrolase MptA.